Here is a 398-residue protein sequence, read N- to C-terminus: 8-amino-7-oxononanoate synthase (398 aa).

Substrate contacts are provided by R22 and R29. A pyridoxal 5'-phosphate-binding site is contributed by 109 to 110; that stretch reads GW. A substrate-binding site is contributed by H141. Residues S189, 214-217, and 242-245 each bind pyridoxal 5'-phosphate; these read DEAH and TFSK. K245 carries the post-translational modification N6-(pyridoxal phosphate)lysine. T359 serves as a coordination point for substrate.

This sequence belongs to the class-II pyridoxal-phosphate-dependent aminotransferase family. BioF subfamily. In terms of assembly, homodimer. The cofactor is pyridoxal 5'-phosphate.

It catalyses the reaction 6-carboxyhexanoyl-[ACP] + L-alanine + H(+) = (8S)-8-amino-7-oxononanoate + holo-[ACP] + CO2. The protein operates within cofactor biosynthesis; biotin biosynthesis. Its function is as follows. Catalyzes the decarboxylative condensation of pimeloyl-[acyl-carrier protein] and L-alanine to produce 8-amino-7-oxononanoate (AON), [acyl-carrier protein], and carbon dioxide. The protein is 8-amino-7-oxononanoate synthase of Gluconacetobacter diazotrophicus (strain ATCC 49037 / DSM 5601 / CCUG 37298 / CIP 103539 / LMG 7603 / PAl5).